The sequence spans 190 residues: ADP-ribosylation factor-like protein 6 (190 aa).

G2 carries N-myristoyl glycine lipidation. Residues 24-31 (GLDNSGKT), T50, 69-73 (DMAGQ), G72, 130-133 (NKMD), and A164 each bind GTP. Mg(2+) contacts are provided by T31 and T50.

The protein belongs to the small GTPase superfamily. Arf family.

It localises to the cytoplasm. This Caenorhabditis briggsae protein is ADP-ribosylation factor-like protein 6.